We begin with the raw amino-acid sequence, 444 residues long: Phosphoribosylamine--glycine ligase (444 aa).

In terms of domain architecture, ATP-grasp spans 109-324; it reads RNLFKKYEID…FLDVCFAIAE (216 aa). 140 to 202 provides a ligand contact to ATP; sequence MTSLGKDVVV…EEKLVGVEFT (63 aa). Residues glutamine 282, glutamate 294, and asparagine 296 each contribute to the Mg(2+) site. Residues glutamine 282, glutamate 294, and asparagine 296 each contribute to the Mn(2+) site.

The protein belongs to the GARS family. Mg(2+) is required as a cofactor. It depends on Mn(2+) as a cofactor.

The catalysed reaction is 5-phospho-beta-D-ribosylamine + glycine + ATP = N(1)-(5-phospho-beta-D-ribosyl)glycinamide + ADP + phosphate + H(+). It participates in purine metabolism; IMP biosynthesis via de novo pathway; N(1)-(5-phospho-D-ribosyl)glycinamide from 5-phospho-alpha-D-ribose 1-diphosphate: step 2/2. In Methanococcus maripaludis (strain C5 / ATCC BAA-1333), this protein is Phosphoribosylamine--glycine ligase.